Consider the following 322-residue polypeptide: Tubulin alpha-4 chain (322 aa).

GTP-binding residues include Ser-15, Gly-19, Thr-20, Thr-54, Asn-81, and Asn-103. Glu-129 is an active-site residue.

The protein belongs to the tubulin family. As to quaternary structure, dimer of alpha and beta chains. A typical microtubule is a hollow water-filled tube with an outer diameter of 25 nm and an inner diameter of 15 nM. Alpha-beta heterodimers associate head-to-tail to form protofilaments running lengthwise along the microtubule wall with the beta-tubulin subunit facing the microtubule plus end conferring a structural polarity. Microtubules usually have 13 protofilaments but different protofilament numbers can be found in some organisms and specialized cells. It depends on Mg(2+) as a cofactor. Some glutamate residues at the C-terminus are polyglycylated, resulting in polyglycine chains on the gamma-carboxyl group. Glycylation is mainly limited to tubulin incorporated into axonemes (cilia and flagella) whereas glutamylation is prevalent in neuronal cells, centrioles, axonemes, and the mitotic spindle. Both modifications can coexist on the same protein on adjacent residues, and lowering polyglycylation levels increases polyglutamylation, and reciprocally. The precise function of polyglycylation is still unclear. Post-translationally, some glutamate residues at the C-terminus are polyglutamylated, resulting in polyglutamate chains on the gamma-carboxyl group. Polyglutamylation plays a key role in microtubule severing by spastin (SPAST). SPAST preferentially recognizes and acts on microtubules decorated with short polyglutamate tails: severing activity by SPAST increases as the number of glutamates per tubulin rises from one to eight, but decreases beyond this glutamylation threshold.

It localises to the cytoplasm. It is found in the cytoskeleton. The enzyme catalyses GTP + H2O = GDP + phosphate + H(+). Its function is as follows. Tubulin is the major constituent of microtubules, a cylinder consisting of laterally associated linear protofilaments composed of alpha- and beta-tubulin heterodimers. Microtubules grow by the addition of GTP-tubulin dimers to the microtubule end, where a stabilizing cap forms. Below the cap, tubulin dimers are in GDP-bound state, owing to GTPase activity of alpha-tubulin. The protein is Tubulin alpha-4 chain of Gallus gallus (Chicken).